We begin with the raw amino-acid sequence, 360 residues long: Isocitrate dehydrogenase [NAD] subunit 1, mitochondrial (360 aa).

A mitochondrion-targeting transit peptide spans 1-11 (MLNRTIAKRTL). 3 residues coordinate substrate: R109, R140, and D228. Mg(2+) is bound at residue D228.

It belongs to the isocitrate and isopropylmalate dehydrogenases family. Octamer of two non-identical subunits IDH1 and IDH2. Mg(2+) is required as a cofactor. It depends on Mn(2+) as a cofactor.

It localises to the mitochondrion. It carries out the reaction D-threo-isocitrate + NAD(+) = 2-oxoglutarate + CO2 + NADH. Allosterically regulated by several compounds including AMP, NAD(+), and citrate. Functionally, performs an essential role in the oxidative function of the citric acid cycle. Also binds RNA; specifically to the 5'-untranslated leaders of mitochondrial mRNAs. This chain is Isocitrate dehydrogenase [NAD] subunit 1, mitochondrial (IDH1), found in Saccharomyces cerevisiae (strain ATCC 204508 / S288c) (Baker's yeast).